The following is a 224-amino-acid chain: Phosphoribosylformylglycinamidine synthase subunit PurQ (224 aa).

The region spanning 4 to 224 is the Glutamine amidotransferase type-1 domain; sequence RIGVVTFPGT…YSALDAVLTG (221 aa). C87 acts as the Nucleophile in catalysis. Residues H195 and E197 contribute to the active site.

Part of the FGAM synthase complex composed of 1 PurL, 1 PurQ and 2 PurS subunits.

The protein resides in the cytoplasm. The catalysed reaction is N(2)-formyl-N(1)-(5-phospho-beta-D-ribosyl)glycinamide + L-glutamine + ATP + H2O = 2-formamido-N(1)-(5-O-phospho-beta-D-ribosyl)acetamidine + L-glutamate + ADP + phosphate + H(+). It carries out the reaction L-glutamine + H2O = L-glutamate + NH4(+). It participates in purine metabolism; IMP biosynthesis via de novo pathway; 5-amino-1-(5-phospho-D-ribosyl)imidazole from N(2)-formyl-N(1)-(5-phospho-D-ribosyl)glycinamide: step 1/2. Functionally, part of the phosphoribosylformylglycinamidine synthase complex involved in the purines biosynthetic pathway. Catalyzes the ATP-dependent conversion of formylglycinamide ribonucleotide (FGAR) and glutamine to yield formylglycinamidine ribonucleotide (FGAM) and glutamate. The FGAM synthase complex is composed of three subunits. PurQ produces an ammonia molecule by converting glutamine to glutamate. PurL transfers the ammonia molecule to FGAR to form FGAM in an ATP-dependent manner. PurS interacts with PurQ and PurL and is thought to assist in the transfer of the ammonia molecule from PurQ to PurL. This chain is Phosphoribosylformylglycinamidine synthase subunit PurQ, found in Mycobacterium bovis (strain ATCC BAA-935 / AF2122/97).